An 838-amino-acid polypeptide reads, in one-letter code: Serine/threonine-protein phosphatase 4 regulatory subunit 3 (838 aa).

2 disordered regions span residues 452–482 and 745–838; these read NNCNGNSAVKAGESNGAESPIAPPGSRSPSR and AINK…SESS. Over residues 747-761 the composition is skewed to polar residues; sequence NKQQDNNGERNTTTG. Positions 783–792 are enriched in acidic residues; that stretch reads SDGENNENNE.

As to quaternary structure, regulatory subunit 3 (R3) of the histone H2A phosphatase complex (HTP-C) consisting of PPH3, PSY2 and PSY4.

The protein localises to the nucleus. Core regulatory subunit of the histone H2A phosphatase complex, which dephosphorylates H2AS128ph (gamma-H2A) that has been displaced from sites of DNA lesions in the double-stranded DNA break repair process. Dephosphorylation is necessary for efficient recovery from the DNA damage checkpoint. This is Serine/threonine-protein phosphatase 4 regulatory subunit 3 (PSY2) from Eremothecium gossypii (strain ATCC 10895 / CBS 109.51 / FGSC 9923 / NRRL Y-1056) (Yeast).